The primary structure comprises 352 residues: D-arabitol-phosphate dehydrogenase (352 aa).

Residues Cys43, His65, Cys96, Cys99, Cys102, Cys110, and Glu151 each contribute to the Mn(2+) site.

It belongs to the zinc-containing alcohol dehydrogenase family. As to quaternary structure, homotetramer. Mn(2+) is required as a cofactor.

The enzyme catalyses D-arabinitol 1-phosphate + NAD(+) = D-xylulose 5-phosphate + NADH + H(+). With respect to regulation, inhibited by EDTA, 4-hydroxymercuribenzoic acid (PHMB), mercury and zinc ions at a concentration of 2 mM. Involved in the arabitol catabolism via the arabitol phosphate route. Catalyzes only the transformation of D-arabitol 1-phosphate (Arb1P) and D-arabitol 5-phosphate (Arb5P) into D-xylulose 5-phosphate (Xlu5P) and ribulose 5-phosphate, respectively. It can use both NAD and NADP. The sequence is that of D-arabitol-phosphate dehydrogenase from Enterococcus avium (Streptococcus avium).